A 971-amino-acid polypeptide reads, in one-letter code: Polyamine-modulated factor 1-binding protein 1 (971 aa).

6 coiled-coil regions span residues 37–69, 117–229, 282–325, 355–680, 706–827, and 879–916; these read NKQYHLRQLQQLKKKLLTLQQELEIRTQELQAS, EKLH…ACSN, LHVE…LREE, QKLS…SAIQ, QDDL…DEKE, and IAKLTGEKDHLHNVMAHLQQENKKLKNEIEEKKLKAGT.

In terms of tissue distribution, expressed in testis and more specifically in ODF, the sperm tail specific cytoskeletal structure. Also expressed in epididymides and brain.

Its subcellular location is the cell projection. It localises to the cilium. It is found in the flagellum. Required for normal spermatogenesis. It functions as a scaffold protein that attaches the sperm head-tail connecting piece to the nuclear envelope, thus maintaining sperm head and tail integrity. May also be involved in the general organization of cellular cytoskeleton. The protein is Polyamine-modulated factor 1-binding protein 1 (Pmfbp1) of Rattus norvegicus (Rat).